We begin with the raw amino-acid sequence, 194 residues long: MPRLILASTSPWRRALLEKLTIPFECAAPDVDETPMPGEAPRQLVLRLAQAKAQSLAARFPNHLIIGSDQICVLDGEITGKPLTEEKARQQLAKASGNIVTFYTGLALYNSASGHLQTEVEPFDVHFRHLSEAEIDDYVRKEHPLHCAGSFKSEGLGIALFERLEGRDPNTLIGLPLIALCQMLRREGFNPLQQ.

Asp69 serves as the catalytic Proton acceptor.

The protein belongs to the Maf family. YceF subfamily. The cofactor is a divalent metal cation.

It localises to the cytoplasm. The enzyme catalyses N(7)-methyl-GTP + H2O = N(7)-methyl-GMP + diphosphate + H(+). Nucleoside triphosphate pyrophosphatase that hydrolyzes 7-methyl-GTP (m(7)GTP). May have a dual role in cell division arrest and in preventing the incorporation of modified nucleotides into cellular nucleic acids. The chain is 7-methyl-GTP pyrophosphatase (yceF) from Salmonella typhimurium (strain LT2 / SGSC1412 / ATCC 700720).